A 205-amino-acid polypeptide reads, in one-letter code: MSVVFVAASKLPTPFGEFTMHGFLDEESGKEHVALTMGDIADGAPVLGRLHSECLTGDALFSLRCDCGFQLEGALAAIAEEGRGVLLYLRQEGRGIGLLNKIRAYELQDGGADTVEANLQLGFGADQRDYAMCQPMLAHLGVSSLRLMTNNPRKVKALESYAVTVAERVPLQKGLNKHNRRYLATKAGKLGHMLGSLHQGEAETT.

Residue 49 to 53 participates in GTP binding; that stretch reads RLHSE. Zn(2+) is bound by residues C54, C65, and C67. GTP-binding positions include Q70, 92–94, and T114; that span reads EGR. Residue D126 is the Proton acceptor of the active site. The active-site Nucleophile is the R128. GTP contacts are provided by T149 and K154.

Belongs to the GTP cyclohydrolase II family. Zn(2+) is required as a cofactor.

The catalysed reaction is GTP + 4 H2O = 2,5-diamino-6-hydroxy-4-(5-phosphoribosylamino)-pyrimidine + formate + 2 phosphate + 3 H(+). It functions in the pathway cofactor biosynthesis; riboflavin biosynthesis; 5-amino-6-(D-ribitylamino)uracil from GTP: step 1/4. In terms of biological role, catalyzes the conversion of GTP to 2,5-diamino-6-ribosylamino-4(3H)-pyrimidinone 5'-phosphate (DARP), formate and pyrophosphate. This Pseudomonas paraeruginosa (strain DSM 24068 / PA7) (Pseudomonas aeruginosa (strain PA7)) protein is GTP cyclohydrolase-2.